The following is a 242-amino-acid chain: Probable porphobilinogen deaminase (242 aa).

This sequence belongs to the HMBS family.

It carries out the reaction 4 porphobilinogen + H2O = hydroxymethylbilane + 4 NH4(+). It participates in porphyrin-containing compound metabolism; protoporphyrin-IX biosynthesis; coproporphyrinogen-III from 5-aminolevulinate: step 2/4. Functionally, tetrapolymerization of the monopyrrole PBG into the hydroxymethylbilane pre-uroporphyrinogen in several discrete steps. The sequence is that of Probable porphobilinogen deaminase (hemC) from Chlamydia muridarum (strain MoPn / Nigg).